The sequence spans 373 residues: MAQESPKNSAAEIPVTSNGEVDDSREHSFNRDLKHSLPSGLGLSETQITSHGFDNTKEGVIEAGAFQGSPAPPLPSVMSPSRVAASRLAQQGSDLIVPAGGQRTQTKSGPVILADEIKNPAMEKLELVRKWSLNTYKCTRQIISEKLGRGSRTVDLELEAQIDILRDNKKKYENILKLAQTLSTQLFQMVHTQRQLGDAFADLSLKSLELHEEFGYNADTQKLLAKNGETLLGAINFFIASVNTLVNKTIEDTLMTVKQYESARIEYDAYRTDLEELNLGPRDANTLPKIEQSQHLFQAHKEKYDKMRNDVSVKLKFLEENKVKVLHNQLVLFHNAIAAYFAGNQKQLEQTLKQFHIKLKTPGVDAPSWLEEQ.

Residues 1–47 form a disordered region; that stretch reads MAQESPKNSAAEIPVTSNGEVDDSREHSFNRDLKHSLPSGLGLSETQ. At Ala2 the chain carries N-acetylalanine. Phosphoserine occurs at positions 5, 28, 36, 39, 69, 79, and 132. The segment covering 22 to 35 has biased composition (basic and acidic residues); the sequence is DDSREHSFNRDLKH. An AH domain is found at 153–353; the sequence is TVDLELEAQI…NQKQLEQTLK (201 aa). Thr361 bears the Phosphothreonine mark.

Forms homodimers or heterodimers with ARFIP2. Interacts with non-myristoylated GTP-bound ARF3, but not to GDP-bound ARF3. Interacts with ARF1. Binds with lower affinity to ARF5 and with very little affinity to ARF6. Interacts with ARL1. Interacts with ATG9A. Post-translationally, phosphorylated by PRKD1; phosphorylation delocalizes ARFIP1 from the Golgi and disrupts its ability to inhibit the activity of ADP-ribosylation factor, an important component of the vesicle scission machinery. Ubiquitously expressed. Higher levels in liver, pancreas, placenta, skeletal muscle and heart.

The protein resides in the golgi apparatus. The protein localises to the trans-Golgi network membrane. Its function is as follows. Plays a role in controlling biogenesis of secretory granules at the trans-Golgi network. Mechanistically, binds ARF-GTP at the neck of a growing secretory granule precursor and forms a protective scaffold. Once the granule precursor has been completely loaded, active PRKD1 phosphorylates ARFIP1 and releases it from ARFs. In turn, ARFs induce fission. Through this mechanism, ensures proper secretory granule formation at the Golgi of pancreatic beta cells. This chain is Arfaptin-1, found in Homo sapiens (Human).